A 602-amino-acid polypeptide reads, in one-letter code: Alpha-glucosides permease MPH3 (602 aa).

At 1–106 the chain is on the cytoplasmic side; that stretch reads MKNLSFLINR…AAAWSLLVST (106 aa). A helical membrane pass occupies residues 107-127; it reads TLIMEGYDTAILGAFYALPIF. The Extracellular portion of the chain corresponds to 128–142; sequence QRKFGSQNDKTGEWE. Residues 143–163 form a helical membrane-spanning segment; the sequence is ISASWQIGLTLCYMAGEIVGL. Residues 164-178 are Cytoplasmic-facing; sequence QLTGPSVDLVGNRYT. The helical transmembrane segment at 179–199 threads the bilayer; the sequence is LIIALFFLAAFTFILYFCNSL. Residue G200 is a topological domain, extracellular. The helical transmembrane segment at 201-221 threads the bilayer; that stretch reads MIAVGQALCGMPWGCFQCLTV. Over 222-234 the chain is Cytoplasmic; it reads SYASEICPLALRY. A helical transmembrane segment spans residues 235-255; that stretch reads YLTTYSNLCWLFGQLFAAGIM. Residues 256–270 are Extracellular-facing; it reads KNSQKKYADSELGYK. The chain crosses the membrane as a helical span at residues 271–291; sequence LPFALQWILPVPLALGIFFAP. Residues 292 to 363 are Cytoplasmic-facing; sequence ESPWWLVKKG…EDKINRRRTR (72 aa). A helical membrane pass occupies residues 364–384; sequence ITCLCWAGQATCGSILIGYST. The Extracellular segment spans residues 385–397; sequence YFYEKAGVSTEMS. The chain crosses the membrane as a helical span at residues 398–418; the sequence is FTFSIIQYCLGICATFLSWWA. Over 419–426 the chain is Cytoplasmic; that stretch reads SKYFGRYD. The helical transmembrane segment at 427–447 threads the bilayer; sequence LYAFGLAFQTIVFFIIGGLGC. Residues 448 to 459 lie on the Extracellular side of the membrane; the sequence is SSTHGSKMGSGS. The helical transmembrane segment at 460-480 threads the bilayer; sequence LLMAVAFFYNLGIAPVVFCLV. Residues 481–492 are Cytoplasmic-facing; it reads SEMPSSRLRTKT. A helical membrane pass occupies residues 493–513; that stretch reads IILARNTYNVVSIICSVLILY. Residues 514–525 are Extracellular-facing; that stretch reads QLNSKKWNWGAK. The helical transmembrane segment at 526-546 threads the bilayer; that stretch reads SGFFWGVLCFCTLIWAVVDLP. Residues 547 to 602 are Cytoplasmic-facing; the sequence is ETAGKTFVEINELFKLGVSARKFKSTKVDPFVVKNPPKDVSHNDPKGDIEASIAEE. The interval 580-602 is disordered; the sequence is KNPPKDVSHNDPKGDIEASIAEE. Residues 582 to 595 show a composition bias toward basic and acidic residues; it reads PPKDVSHNDPKGDI.

Belongs to the major facilitator superfamily. Sugar transporter (TC 2.A.1.1) family.

The protein localises to the cell membrane. Its function is as follows. High-affinity uptake of maltose and maltotriose. Also transports alpha-methylglucoside, glucose and turanose but not melezitose or trehalose. In Saccharomyces cerevisiae (strain AWRI1631) (Baker's yeast), this protein is Alpha-glucosides permease MPH3 (MPH3).